The primary structure comprises 425 residues: Glucose-1-phosphate adenylyltransferase (425 aa).

Residues Tyr-109, Gly-175, 190-191, and Ser-208 contribute to the alpha-D-glucose 1-phosphate site; that span reads EK.

Belongs to the bacterial/plant glucose-1-phosphate adenylyltransferase family. Homotetramer.

It carries out the reaction alpha-D-glucose 1-phosphate + ATP + H(+) = ADP-alpha-D-glucose + diphosphate. Its pathway is glycan biosynthesis; glycogen biosynthesis. Functionally, involved in the biosynthesis of ADP-glucose, a building block required for the elongation reactions to produce glycogen. Catalyzes the reaction between ATP and alpha-D-glucose 1-phosphate (G1P) to produce pyrophosphate and ADP-Glc. This chain is Glucose-1-phosphate adenylyltransferase, found in Saccharophagus degradans (strain 2-40 / ATCC 43961 / DSM 17024).